We begin with the raw amino-acid sequence, 75 residues long: Protein P8 (75 aa).

The interval 19–47 is disordered; that stretch reads PMGGMPSIASSSSAETGQQTQSGNFTGGG. The span at 26 to 39 shows a compositional bias: polar residues; that stretch reads IASSSSAETGQQTQ. A helical membrane pass occupies residues 55 to 72; it reads NNQLLIVGAVVIGLFLVI.

It is found in the virion membrane. In Pseudoalteromonas phage PM2 (Bacteriophage PM2), this protein is Protein P8 (VIII).